Consider the following 193-residue polypeptide: Potassium-transporting ATPase KdpC subunit (193 aa).

Residues 7-27 (PALVLFALLSALTGLAYPLAV) form a helical membrane-spanning segment.

Belongs to the KdpC family. The system is composed of three essential subunits: KdpA, KdpB and KdpC.

Its subcellular location is the cell inner membrane. Its function is as follows. Part of the high-affinity ATP-driven potassium transport (or Kdp) system, which catalyzes the hydrolysis of ATP coupled with the electrogenic transport of potassium into the cytoplasm. This subunit acts as a catalytic chaperone that increases the ATP-binding affinity of the ATP-hydrolyzing subunit KdpB by the formation of a transient KdpB/KdpC/ATP ternary complex. This Variovorax paradoxus (strain S110) protein is Potassium-transporting ATPase KdpC subunit.